Consider the following 274-residue polypeptide: Large ribosomal subunit protein uL2cz/uL2cy (274 aa).

Disordered stretches follow at residues 1–22 (MAIH…DSQV) and 225–274 (PVDH…RRSK).

The protein belongs to the universal ribosomal protein uL2 family. In terms of assembly, part of the 50S ribosomal subunit.

It is found in the plastid. It localises to the chloroplast. The protein is Large ribosomal subunit protein uL2cz/uL2cy (rpl2-A) of Arabis hirsuta (Hairy rock-cress).